A 648-amino-acid chain; its full sequence is Bifunctional protein TilS/HprT (648 aa).

An ATP-binding site is contributed by 29–34; it reads SGGPDS. Asp627 contacts Mg(2+).

This sequence in the N-terminal section; belongs to the tRNA(Ile)-lysidine synthase family. The protein in the C-terminal section; belongs to the purine/pyrimidine phosphoribosyltransferase family. Requires Mg(2+) as cofactor.

Its subcellular location is the cytoplasm. The enzyme catalyses IMP + diphosphate = hypoxanthine + 5-phospho-alpha-D-ribose 1-diphosphate. It catalyses the reaction GMP + diphosphate = guanine + 5-phospho-alpha-D-ribose 1-diphosphate. It carries out the reaction cytidine(34) in tRNA(Ile2) + L-lysine + ATP = lysidine(34) in tRNA(Ile2) + AMP + diphosphate + H(+). Functionally, ligates lysine onto the cytidine present at position 34 of the AUA codon-specific tRNA(Ile) that contains the anticodon CAU, in an ATP-dependent manner. Cytidine is converted to lysidine, thus changing the amino acid specificity of the tRNA from methionine to isoleucine. The protein is Bifunctional protein TilS/HprT (tilS/hprT) of Listeria monocytogenes serovar 1/2a (strain ATCC BAA-679 / EGD-e).